Consider the following 318-residue polypeptide: Acetylglutamate kinase (318 aa).

Substrate-binding positions include 80–81 (GG), Arg102, and Asn203.

Belongs to the acetylglutamate kinase family. ArgB subfamily.

Its subcellular location is the cytoplasm. It catalyses the reaction N-acetyl-L-glutamate + ATP = N-acetyl-L-glutamyl 5-phosphate + ADP. It participates in amino-acid biosynthesis; L-arginine biosynthesis; N(2)-acetyl-L-ornithine from L-glutamate: step 2/4. Catalyzes the ATP-dependent phosphorylation of N-acetyl-L-glutamate. This chain is Acetylglutamate kinase, found in Bifidobacterium adolescentis (strain ATCC 15703 / DSM 20083 / NCTC 11814 / E194a).